Here is an 845-residue protein sequence, read N- to C-terminus: Nuclear pore complex protein Nup107 (845 aa).

2 disordered regions span residues 1-26 (MADS…MPPQ) and 677-702 (QNRP…MASE). Composition is skewed to polar residues over residues 7–26 (PRSS…MPPQ) and 685–694 (TSHAASSQDN).

This sequence belongs to the nucleoporin Nup84/Nup107 family. Part of the nuclear pore complex (NPC). In terms of tissue distribution, expressed in spermatocytes (at protein level).

The protein localises to the nucleus. It localises to the nuclear pore complex. The protein resides in the nucleus envelope. Its subcellular location is the nucleus membrane. It is found in the cytoplasm. The protein localises to the cytoskeleton. It localises to the spindle. The protein resides in the chromosome. Its subcellular location is the nucleus matrix. Its function is as follows. Plays a role in nuclear pore complex (NPC) assembly and maintenance. Required for nuclear import of Mad. Mediates the association between the nuclear pore complex and a subset of active chromatin regions adjacent to lamin-associated domains. Plays a role in double strand break repair by relocalizing the heterochromatic double strand breaks (DSBs) to the nuclear periphery as part of the homologous recombination (HR) repair process. Regulates cytokinesis during spermatocyte meiosis by maintaining type-B lamin Lam localization to the spindle envelope. Regulates female gonad development and oogenesis. This chain is Nuclear pore complex protein Nup107, found in Drosophila melanogaster (Fruit fly).